The chain runs to 143 residues: CRISPR-associated endoribonuclease Cas2 (143 aa).

Asp-14 is a Mg(2+) binding site.

Belongs to the CRISPR-associated endoribonuclease Cas2 protein family. In terms of assembly, homodimer, forms a heterotetramer with a Cas1 homodimer. Mg(2+) serves as cofactor.

In terms of biological role, CRISPR (clustered regularly interspaced short palindromic repeat), is an adaptive immune system that provides protection against mobile genetic elements (viruses, transposable elements and conjugative plasmids). CRISPR clusters contain sequences complementary to antecedent mobile elements and target invading nucleic acids. CRISPR clusters are transcribed and processed into CRISPR RNA (crRNA). Functions as a ssRNA-specific endoribonuclease. Involved in the integration of spacer DNA into the CRISPR cassette. The protein is CRISPR-associated endoribonuclease Cas2 of Campylobacter jejuni subsp. jejuni serotype O:2 (strain ATCC 700819 / NCTC 11168).